The primary structure comprises 100 residues: Small ribosomal subunit protein uS14 (100 aa).

The protein belongs to the universal ribosomal protein uS14 family. In terms of assembly, part of the 30S ribosomal subunit. Contacts proteins S3 and S10.

Binds 16S rRNA, required for the assembly of 30S particles and may also be responsible for determining the conformation of the 16S rRNA at the A site. In Prochlorococcus marinus (strain AS9601), this protein is Small ribosomal subunit protein uS14.